The primary structure comprises 327 residues: D-alanine--D-alanine ligase (327 aa).

Residues 113–312 (KRLWMTYGLA…YEDFVMQVVA (200 aa)) form the ATP-grasp domain. 139 to 194 (AADLGLPLIVKPAREGSSIGLTKVTAADQMRAAFEKAAALDNDVIAETFIDGAELT) serves as a coordination point for ATP. Asp-266, Glu-279, and Asn-281 together coordinate Mg(2+).

This sequence belongs to the D-alanine--D-alanine ligase family. The cofactor is Mg(2+). It depends on Mn(2+) as a cofactor.

Its subcellular location is the cytoplasm. It carries out the reaction 2 D-alanine + ATP = D-alanyl-D-alanine + ADP + phosphate + H(+). It functions in the pathway cell wall biogenesis; peptidoglycan biosynthesis. In terms of biological role, cell wall formation. The protein is D-alanine--D-alanine ligase of Cupriavidus necator (strain ATCC 17699 / DSM 428 / KCTC 22496 / NCIMB 10442 / H16 / Stanier 337) (Ralstonia eutropha).